A 293-amino-acid polypeptide reads, in one-letter code: Aromatic amino acid exporter YddG (293 aa).

The Cytoplasmic segment spans residues 1-6 (MTSQKA). A helical membrane pass occupies residues 7–27 (TLIGLVAIVLWSTMVGLIRGV). Residues 15-137 (VLWSTMVGLI…IALTGVCWVL (123 aa)) form the EamA 1 domain. Residues 28–33 (SEGLGP) lie on the Periplasmic side of the membrane. A helical membrane pass occupies residues 34–54 (VGGAAMIYSLSGLLLIFTVGL). Over 55 to 63 (PDIRRFPGR) the chain is Cytoplasmic. Residues 64 to 84 (YLIAGSVLFVSYEICLALSLG) form a helical membrane-spanning segment. Residues 85 to 92 (YAATRHQA) lie on the Periplasmic side of the membrane. A helical membrane pass occupies residues 93–113 (IEVGMVNYLWPSLTILFAILF). Residues 114 to 119 (NGQKTN) lie on the Cytoplasmic side of the membrane. The chain crosses the membrane as a helical span at residues 120–140 (WLIVPGLLIALTGVCWVLGGE). At 141 to 147 (NGLNPGE) the chain is on the periplasmic side. A helical membrane pass occupies residues 148-168 (IISNVATSPLSYLLAFLGAFI). The 119-residue stretch at 167–285 (FIWATYCTVT…AVMVCVGSLL (119 aa)) folds into the EamA 2 domain. Topologically, residues 169–182 (WATYCTVTNKYARG) are cytoplasmic. The helical transmembrane segment at 183 to 203 (FNGITVFVLLTAVALWLHYFL) threads the bilayer. Topologically, residues 204-207 (TPQP) are periplasmic. The chain crosses the membrane as a helical span at residues 208-228 (AMIFSLPVIAKLFTAALTLGF). Over 229–243 (AYAAWNVGILHGNVT) the chain is Cytoplasmic. Residues 244–264 (IMAVGSYFTPVMSSALAALLL) traverse the membrane as a helical segment. At 265–267 (SSP) the chain is on the periplasmic side. Residues 268-288 (LSFSFWQGAVMVCVGSLLCWL) traverse the membrane as a helical segment. Residues 289 to 293 (ATRRR) are Cytoplasmic-facing.

Belongs to the drug/metabolite transporter (DMT) superfamily. Aromatic amino acid/paraquat exporter (ArAA/P-E) (TC 2.A.7.17) family.

It is found in the cell inner membrane. Its function is as follows. Amino acid transporter with broad substrate specificity. Required for resistance to methyl viologen. May function with OmpD porin. The polypeptide is Aromatic amino acid exporter YddG (yddG) (Salmonella typhimurium (strain 14028s / SGSC 2262)).